The following is a 54-amino-acid chain: Large ribosomal subunit protein bL32c (54 aa).

The protein belongs to the bacterial ribosomal protein bL32 family.

Its subcellular location is the plastid. It is found in the chloroplast. In Gossypium barbadense (Sea Island cotton), this protein is Large ribosomal subunit protein bL32c.